Here is a 287-residue protein sequence, read N- to C-terminus: Large ribosomal subunit protein uL2 (287 aa).

A disordered region spans residues 221 to 287; sequence RGSVMNPCDH…SKRSRGGRDS (67 aa). Residues 258-287 show a composition bias toward basic residues; that stretch reads KTRKRNKPSNRFVLRKRRRVSKRSRGGRDS.

This sequence belongs to the universal ribosomal protein uL2 family. As to quaternary structure, part of the 50S ribosomal subunit. Forms a bridge to the 30S subunit in the 70S ribosome.

Functionally, one of the primary rRNA binding proteins. Required for association of the 30S and 50S subunits to form the 70S ribosome, for tRNA binding and peptide bond formation. It has been suggested to have peptidyltransferase activity; this is somewhat controversial. Makes several contacts with the 16S rRNA in the 70S ribosome. The polypeptide is Large ribosomal subunit protein uL2 (Prochlorococcus marinus (strain MIT 9211)).